We begin with the raw amino-acid sequence, 627 residues long: Coiled-coil domain-containing protein 22 (627 aa).

Residues 1-321 (MEEADRILIH…VSDVPATSRR (321 aa)) form a sufficient for interaction with COMMD1 region. Residues 1 to 447 (MEEADRILIH…LQDCRELESS (447 aa)) are sufficicient and required for interaction with CCDC93. Residues 218-243 (TGRDRPGDEDWVHRTSRLPPQEDTRA) form a disordered region. Residues 219–230 (GRDRPGDEDWVH) are compositionally biased toward basic and acidic residues. Residues 320 to 627 (RRPEQVTWAA…AGLLGRVREA (308 aa)) are a coiled coil. Residue Ser410 is modified to Phosphoserine.

The protein belongs to the CCDC22 family. As to quaternary structure, component of the commander complex consisting of the CCC subcomplex and the retriever subcomplex. Component of the CCC (COMMD/CCDC22/CCDC93) subcomplex consisting of COMMD1, COMMD2, COMMD3, COMMD4, COMMD5, COMMD6, COMMD7, COMMD8, COMMD9, COMMD10, CCDC22 and CCDC93. Forms a coiled-coil heterodimer with CCDC22; this heterodimer interacts with the guanine nucleotide exchange factor DENND10; the interaction is direct. Interacts with CUL1, CUL2, CUL3, SKP1, BTRC. Interacts with SNX17 and SNX31. Interacts with CPNE1 and CPNE4. In terms of tissue distribution, widely expressed in adult tissues and in fetal liver and brain, with highest levels in prostate and lowest in skeletal muscle.

The protein resides in the endosome. The protein localises to the cytoplasm. Its subcellular location is the cytoskeleton. It localises to the microtubule organizing center. It is found in the centrosome. In terms of biological role, component of the commander complex that is essential for endosomal recycling of transmembrane cargos; the Commander complex is composed of composed of the CCC subcomplex and the retriever subcomplex. Component of the CCC complex, which is involved in the regulation of endosomal recycling of surface proteins, including integrins, signaling receptor and channels. Involved in regulation of NF-kappa-B signaling. Promotes ubiquitination of I-kappa-B-kinase subunit IKBKB and its subsequent proteasomal degradation leading to NF-kappa-B activation; the function may involve association with COMMD8 and a CUL1-dependent E3 ubiquitin ligase complex. May down-regulate NF-kappa-B activity via association with COMMD1 and involving a CUL2-dependent E3 ubiquitin ligase complex. Regulates the cellular localization of COMM domain-containing proteins, such as COMMD1 and COMMD10. Component of the CCC complex, which is involved in the regulation of endosomal recycling of surface proteins, including integrins, signaling receptor and channels. The CCC complex associates with SNX17, retriever and WASH complexes to prevent lysosomal degradation and promote cell surface recycling of numerous cargos such as integrins ITGA5:ITGB1. Plays a role in copper ion homeostasis. Involved in copper-dependent ATP7A trafficking between the trans-Golgi network and vesicles in the cell periphery; the function is proposed to depend on its association within the CCC complex and cooperation with the WASH complex on early endosomes. Functionally, (Microbial infection) The CCC complex, in collaboration with the heterotrimeric retriever complex, mediates the exit of human papillomavirus to the cell surface. The protein is Coiled-coil domain-containing protein 22 (CCDC22) of Homo sapiens (Human).